The sequence spans 653 residues: Rab11 family-interacting protein 5 (653 aa).

Positions 5-146 (RGAEPAAGPS…AGRAQHTQWY (142 aa)) constitute a C2 domain. S176, S283, S286, S307, S357, and S367 each carry phosphoserine. The interval 269–300 (GPGAELLTRSPSRSSWLSTEGGRDSAQSPKLF) is disordered. Positions 277 to 286 (RSPSRSSWLS) are enriched in polar residues. Disordered stretches follow at residues 342-402 (HIYN…AVLG) and 415-548 (PGAS…RSSL). A compositionally biased stretch (low complexity) spans 357–368 (SISGSLPSSGSL). The segment covering 375–387 (FSEEGPRSTDDTW) has biased composition (basic and acidic residues). S391 and S395 each carry phosphoserine. 2 stretches are compositionally biased toward basic and acidic residues: residues 420–430 (PGEEEGARLPE) and 447–460 (VAEK…ERKP). Phosphoserine occurs at positions 494, 538, 547, and 553. Residues 586 to 648 (KDSAVLDQSA…ETSPTLLQIP (63 aa)) enclose the FIP-RBD domain.

As to quaternary structure, interacts with RAB11FIP4. Interacts with NAPG. Interacts with RO60. Interacts with RAB11A that has been activated by GTP binding. (Microbial infection) Interacts with Kaposi's sarcoma-associated herpesvirus/HHV-8 protein ORF45; this interaction results in the lysosomal degradation of ORF45 and the inhibition of viral particle release. In terms of processing, phosphorylated on serine and threonine residues. Phosphorylation at Ser-357 is PKA-dependent. As to expression, detected at low levels in heart, brain, placenta, lung, liver, adipocytes, kidney, spleen, skeletal muscle and pancreas.

It localises to the cytoplasm. It is found in the recycling endosome membrane. The protein resides in the early endosome membrane. The protein localises to the golgi apparatus membrane. Its subcellular location is the cytoplasmic vesicle. It localises to the secretory vesicle membrane. It is found in the mitochondrion membrane. Functionally, rab effector involved in protein trafficking from apical recycling endosomes to the apical plasma membrane. Involved in insulin granule exocytosis. May regulate V-ATPase intracellular transport in response to extracellular acidosis. This chain is Rab11 family-interacting protein 5, found in Homo sapiens (Human).